The chain runs to 281 residues: Bifunctional protein FolD (281 aa).

Residues 164–166 (GAS), Ile189, and Ile230 each bind NADP(+).

This sequence belongs to the tetrahydrofolate dehydrogenase/cyclohydrolase family. As to quaternary structure, homodimer.

It carries out the reaction (6R)-5,10-methylene-5,6,7,8-tetrahydrofolate + NADP(+) = (6R)-5,10-methenyltetrahydrofolate + NADPH. The enzyme catalyses (6R)-5,10-methenyltetrahydrofolate + H2O = (6R)-10-formyltetrahydrofolate + H(+). It functions in the pathway one-carbon metabolism; tetrahydrofolate interconversion. Its function is as follows. Catalyzes the oxidation of 5,10-methylenetetrahydrofolate to 5,10-methenyltetrahydrofolate and then the hydrolysis of 5,10-methenyltetrahydrofolate to 10-formyltetrahydrofolate. This Sulfurovum sp. (strain NBC37-1) protein is Bifunctional protein FolD.